The chain runs to 345 residues: Succinylglutamate desuccinylase (345 aa).

Residues His64, Glu67, and His161 each contribute to the Zn(2+) site. Residue Glu225 is part of the active site.

The protein belongs to the AspA/AstE family. Succinylglutamate desuccinylase subfamily. Zn(2+) serves as cofactor.

It catalyses the reaction N-succinyl-L-glutamate + H2O = L-glutamate + succinate. The protein operates within amino-acid degradation; L-arginine degradation via AST pathway; L-glutamate and succinate from L-arginine: step 5/5. Functionally, transforms N(2)-succinylglutamate into succinate and glutamate. The polypeptide is Succinylglutamate desuccinylase (Shewanella pealeana (strain ATCC 700345 / ANG-SQ1)).